The chain runs to 242 residues: Glucosamine-6-phosphate deaminase (242 aa).

Catalysis depends on Asp-71, which acts as the Proton acceptor; for enolization step. Asn-142 functions as the For ring-opening step in the catalytic mechanism. Catalysis depends on His-144, which acts as the Proton acceptor; for ring-opening step. The active-site For ring-opening step is the Glu-149.

This sequence belongs to the glucosamine/galactosamine-6-phosphate isomerase family. NagB subfamily.

It catalyses the reaction alpha-D-glucosamine 6-phosphate + H2O = beta-D-fructose 6-phosphate + NH4(+). The protein operates within amino-sugar metabolism; N-acetylneuraminate degradation; D-fructose 6-phosphate from N-acetylneuraminate: step 5/5. Catalyzes the reversible isomerization-deamination of glucosamine 6-phosphate (GlcN6P) to form fructose 6-phosphate (Fru6P) and ammonium ion. The protein is Glucosamine-6-phosphate deaminase of Malacoplasma penetrans (strain HF-2) (Mycoplasma penetrans).